Reading from the N-terminus, the 384-residue chain is Glucose-1-phosphate adenylyltransferase (384 aa).

Alpha-D-glucose 1-phosphate is bound by residues Tyr-103, Gly-168, 183–184, and Ser-194; that span reads EK.

This sequence belongs to the bacterial/plant glucose-1-phosphate adenylyltransferase family. Homotetramer.

It catalyses the reaction alpha-D-glucose 1-phosphate + ATP + H(+) = ADP-alpha-D-glucose + diphosphate. It functions in the pathway glycan biosynthesis; glycogen biosynthesis. Its function is as follows. Involved in the biosynthesis of ADP-glucose, a building block required for the elongation reactions to produce glycogen. Catalyzes the reaction between ATP and alpha-D-glucose 1-phosphate (G1P) to produce pyrophosphate and ADP-Glc. In Fusobacterium nucleatum subsp. nucleatum (strain ATCC 25586 / DSM 15643 / BCRC 10681 / CIP 101130 / JCM 8532 / KCTC 2640 / LMG 13131 / VPI 4355), this protein is Glucose-1-phosphate adenylyltransferase.